The following is a 556-amino-acid chain: Formate--tetrahydrofolate ligase (556 aa).

ATP is bound at residue 65–72 (TPAGEGKS).

This sequence belongs to the formate--tetrahydrofolate ligase family.

The enzyme catalyses (6S)-5,6,7,8-tetrahydrofolate + formate + ATP = (6R)-10-formyltetrahydrofolate + ADP + phosphate. The protein operates within one-carbon metabolism; tetrahydrofolate interconversion. In Streptococcus pneumoniae (strain JJA), this protein is Formate--tetrahydrofolate ligase.